The chain runs to 445 residues: ATP-dependent protease ATPase subunit HslU (445 aa).

ATP contacts are provided by residues I18, 60-65 (GVGKTE), D258, E323, and R395.

Belongs to the ClpX chaperone family. HslU subfamily. As to quaternary structure, a double ring-shaped homohexamer of HslV is capped on each side by a ring-shaped HslU homohexamer. The assembly of the HslU/HslV complex is dependent on binding of ATP.

The protein localises to the cytoplasm. In terms of biological role, ATPase subunit of a proteasome-like degradation complex; this subunit has chaperone activity. The binding of ATP and its subsequent hydrolysis by HslU are essential for unfolding of protein substrates subsequently hydrolyzed by HslV. HslU recognizes the N-terminal part of its protein substrates and unfolds these before they are guided to HslV for hydrolysis. This Syntrophotalea carbinolica (strain DSM 2380 / NBRC 103641 / GraBd1) (Pelobacter carbinolicus) protein is ATP-dependent protease ATPase subunit HslU.